The chain runs to 440 residues: Protein translocase subunit SecY (440 aa).

10 helical membrane passes run 17–37, 74–94, 116–135, 155–175, 178–198, 213–233, 270–290, 316–336, 374–394, and 403–423; these read IFFT…PSPG, IFAI…LLTV, YTRY…IVAL, FFDL…VMWM, LITE…GIAT, GVVF…VVFV, VIPV…TQIV, WQYI…YVSV, LLFV…IMLD, and GATP…LTTV.

This sequence belongs to the SecY/SEC61-alpha family. In terms of assembly, component of the Sec protein translocase complex. Heterotrimer consisting of SecY, SecE and SecG subunits. The heterotrimers can form oligomers, although 1 heterotrimer is thought to be able to translocate proteins. Interacts with the ribosome. Interacts with SecDF, and other proteins may be involved. Interacts with SecA.

Its subcellular location is the cell membrane. Its function is as follows. The central subunit of the protein translocation channel SecYEG. Consists of two halves formed by TMs 1-5 and 6-10. These two domains form a lateral gate at the front which open onto the bilayer between TMs 2 and 7, and are clamped together by SecE at the back. The channel is closed by both a pore ring composed of hydrophobic SecY resides and a short helix (helix 2A) on the extracellular side of the membrane which forms a plug. The plug probably moves laterally to allow the channel to open. The ring and the pore may move independently. The polypeptide is Protein translocase subunit SecY (Corynebacterium glutamicum (strain ATCC 13032 / DSM 20300 / JCM 1318 / BCRC 11384 / CCUG 27702 / LMG 3730 / NBRC 12168 / NCIMB 10025 / NRRL B-2784 / 534)).